The sequence spans 226 residues: Leucyl/phenylalanyl-tRNA--protein transferase (226 aa).

The protein belongs to the L/F-transferase family.

The protein localises to the cytoplasm. The catalysed reaction is N-terminal L-lysyl-[protein] + L-leucyl-tRNA(Leu) = N-terminal L-leucyl-L-lysyl-[protein] + tRNA(Leu) + H(+). The enzyme catalyses N-terminal L-arginyl-[protein] + L-leucyl-tRNA(Leu) = N-terminal L-leucyl-L-arginyl-[protein] + tRNA(Leu) + H(+). It catalyses the reaction L-phenylalanyl-tRNA(Phe) + an N-terminal L-alpha-aminoacyl-[protein] = an N-terminal L-phenylalanyl-L-alpha-aminoacyl-[protein] + tRNA(Phe). In terms of biological role, functions in the N-end rule pathway of protein degradation where it conjugates Leu, Phe and, less efficiently, Met from aminoacyl-tRNAs to the N-termini of proteins containing an N-terminal arginine or lysine. The protein is Leucyl/phenylalanyl-tRNA--protein transferase of Pseudomonas aeruginosa (strain ATCC 15692 / DSM 22644 / CIP 104116 / JCM 14847 / LMG 12228 / 1C / PRS 101 / PAO1).